Consider the following 499-residue polypeptide: Potassium voltage-gated channel subfamily A member 2 (499 aa).

Residues 1 to 27 (MTVATGEPADEAAALPGHPQDTYDPEA) are disordered. The segment at 1–125 (MTVATGEPAD…YELGEEAMEM (125 aa)) is tetramerization domain. At 1-160 (MTVATGEPAD…LLFEYPESSG (160 aa)) the chain is on the cytoplasmic side. Residues 161-182 (PARIIAIVSVMVILISIVSFCL) traverse the membrane as a helical segment. The Extracellular segment spans residues 183-221 (ETLPIFRDENEDMHGGGVTFHTYSNSTIGYQQSTSFTDP). Residue Asn-207 is glycosylated (N-linked (GlcNAc...) asparagine). Residues 222-243 (FFIVETLCIIWFSFEFLVRFFA) traverse the membrane as a helical segment. Cys-244 carries S-palmitoyl cysteine lipidation. The Cytoplasmic portion of the chain corresponds to 244-254 (CPSKAGFFTNI). Residues 255 to 275 (MNIIDIVAIIPYFITLGTELA) form a helical membrane-spanning segment. Topologically, residues 276–289 (EKPEDAQQGQQAMS) are extracellular. A helical; Voltage-sensor membrane pass occupies residues 290-310 (LAILRVIRLVRVFRIFKLSRH). At 311–325 (SKGLQILGQTLKASM) the chain is on the cytoplasmic side. The segment at 312–325 (KGLQILGQTLKASM) is S4-S5 linker. Residues 326–347 (RELGLLIFFLFIGVILFSSAVY) traverse the membrane as a helical segment. Residues 348–361 (FAEADERESQFPSI) lie on the Extracellular side of the membrane. The segment at residues 362–373 (PDAFWWAVVSMT) is an intramembrane region (helical). A Selectivity filter motif is present at residues 374-379 (TVGYGD). The stretch at 374–381 (TVGYGDMV) is an intramembrane region. Residues 382–388 (PTTIGGK) lie on the Extracellular side of the membrane. A helical transmembrane segment spans residues 389–417 (IVGSLCAIAGVLTIALPVPVIVSNFNYFY). Over 418–499 (HRETEGEEQA…VNITKMLTDV (82 aa)) the chain is Cytoplasmic. Tyr-429 is subject to Phosphotyrosine. 4 positions are modified to phosphoserine: Ser-434, Ser-440, Ser-441, and Ser-449. Tyr-458 is modified (phosphotyrosine). Ser-468 bears the Phosphoserine mark. Positions 497–499 (TDV) match the PDZ-binding motif.

This sequence belongs to the potassium channel family. A (Shaker) (TC 1.A.1.2) subfamily. Kv1.2/KCNA2 sub-subfamily. As to quaternary structure, homotetramer and heterotetramer with other channel-forming alpha subunits, such as KCNA1, KCNA4, KCNA5, KCNA6 and KCNA7. Channel activity is regulated by interaction with the beta subunits, including KCNAB1 and KCNAB2. Identified in a complex with KCNA1 and KCNAB2. Identified in a complex with KCNA5 and KCNAB1. Interacts with the beta subunit KCNAB1. Identified in a complex with KCNA4 and FYN. Interacts with PTK2B. Interacts (via C-terminus) with CTTN. Interacts (via N-terminal cytoplasmic domain) with RHOA (GTP-bound form); this regulates channel activity by reducing location at the cell surface in response to CHRM1 activation. Interacts with DRD2. Interacts with SIGMAR1; cocaine consumption leads to increased interaction. Interacts with ADAM22. Interacts with CNTNAP2. Interacts (via C-terminus) with the PDZ domains of DLG1, DLG2 and DLG4. Interacts with ADAM11. Interacts with LYNX1. Post-translationally, phosphorylated on tyrosine residues; phosphorylation increases in response to ischemia. Phosphorylated on tyrosine residues by activated PTK2B/PYK2. Phosphorylation on tyrosine residues suppresses ion channel activity. Phosphorylated on tyrosine residues in response to CHRM1 activation; this abolishes interaction with CTTN. This is probably due to endocytosis of the phosphorylated channel subunits. Phosphorylated on serine residues in response to increased cAMP levels; phosphorylation is apparently not catalyzed by PKA. N-glycosylated, with complex, sialylated N-glycans. In terms of tissue distribution, expressed in a wide variety of gastrointestinal smooth muscles. Not expressed in portal vein, renal artery, and uterus.

The protein localises to the cell membrane. Its subcellular location is the membrane. The protein resides in the cell projection. It localises to the axon. It is found in the synapse. The protein localises to the presynaptic cell membrane. Its subcellular location is the synaptosome. The protein resides in the endoplasmic reticulum membrane. It localises to the dendrite. It is found in the lamellipodium membrane. The protein localises to the cell junction. Its subcellular location is the paranodal septate junction. It carries out the reaction K(+)(in) = K(+)(out). With respect to regulation, inhibited by 4-aminopyridine (4-AP). Inhibited by dendrotoxin (DTX) and charybdotoxin (CTX), but not by tetraethylammonium (TEA). Inhibited by tityustoxin-K alpha (TsTX-Kalpha), a toxin that is highly specific for KCNA2. Inhibited by maurotoxin. Inhibited by kappaM conotoxins kappaM-RIIIJ and kappaM-RIIIK. Functionally, voltage-gated potassium channel that mediates transmembrane potassium transport in excitable membranes, primarily in the brain and the central nervous system, but also in the cardiovascular system. Prevents aberrant action potential firing and regulates neuronal output. Forms tetrameric potassium-selective channels through which potassium ions pass in accordance with their electrochemical gradient. The channel alternates between opened and closed conformations in response to the voltage difference across the membrane. Can form functional homotetrameric channels and heterotetrameric channels that contain variable proportions of KCNA1, KCNA2, KCNA4, KCNA5, KCNA6, KCNA7, and possibly other family members as well; channel properties depend on the type of alpha subunits that are part of the channel. Channel properties are modulated by cytoplasmic beta subunits that regulate the subcellular location of the alpha subunits and promote rapid inactivation of delayed rectifier potassium channels. In vivo, membranes probably contain a mixture of heteromeric potassium channel complexes, making it difficult to assign currents observed in intact tissues to any particular potassium channel family member. Homotetrameric KCNA2 forms a delayed-rectifier potassium channel that opens in response to membrane depolarization, followed by slow spontaneous channel closure. In contrast, a heteromultimer formed by KCNA2 and KCNA4 shows rapid inactivation. Regulates neuronal excitability and plays a role as pacemaker in the regulation of neuronal action potentials. KCNA2-containing channels play a presynaptic role and prevent hyperexcitability and aberrant action potential firing. Response to toxins that are selective for KCNA2-containing potassium channels suggests that in Purkinje cells, dendritic subthreshold KCNA2-containing potassium channels prevent random spontaneous calcium spikes, suppressing dendritic hyperexcitability without hindering the generation of somatic action potentials, and thereby play an important role in motor coordination. Plays a role in the induction of long-term potentiation of neuron excitability in the CA3 layer of the hippocampus. May function as down-stream effector for G protein-coupled receptors and inhibit GABAergic inputs to basolateral amygdala neurons. May contribute to the regulation of neurotransmitter release, such as gamma-aminobutyric acid (GABA). Contributes to the regulation of the axonal release of the neurotransmitter dopamine. Reduced KCNA2 expression plays a role in the perception of neuropathic pain after peripheral nerve injury, but not acute pain. Plays a role in the regulation of the time spent in non-rapid eye movement (NREM) sleep. This Canis lupus familiaris (Dog) protein is Potassium voltage-gated channel subfamily A member 2 (KCNA2).